The chain runs to 1082 residues: MRVRVDVCWTQHIFLFFVFGLSFMSFALSLDGDDYSKTGNPKALVSVTNLIYTRLQNLKTVLKADVDRDLGYCIKNLKGDWNEAFNFDKNLDFLSNCVKKNDGDLTLRLCSAAEIKFYFSSFVRRDEATTVHVKPNINCNLAKWVSGCEPGWSCNADDEKRFDLNNGKILPSRTRKCQPCCEGFFCPQGLACMIPCPLGAYCPLAKLNKTTGFCEPYNYQIPPGKLNHTCGSADSWVDAESSGDMFCSPGSYCPTTIRKVTCSSGHYCRQGSTSQKPCFKLATCNPNTANQNIHAYGAILIASLSLLMIMVYNCSDQVLATREKRQAKSREAAARHAKETTQARERWKTAKGVAKNQKMGLSAQLSQTFSRMKSARKDATPVKASGKSKDKKKEPSNLTKMMKSMEENPSNNEGFNVGTGSKPGKKPQAPKGKQLHTQSQIFKYAYGQIEKEKAMEQNNKNLTFSGVISMATDTEMRTRPVIEVAFKDLTLTLKGKHKHILRSVTGKIMPGRVSAVMGPSGAGKTTFLSALAGKATGCTRTGLILINGRNDSINSYKKITGFVPQDDVVHGNLTVEENLRFSARCRLSAYMSKADKVLIIERVIESLGLQHVRDSLVGTIEKRGISGGQRKRVNVGVEMVMEPSLLILDEPTTGLDSASSQLLLRALRREALEGVNICMVVHQPSYTMYKMFDDMIILAKGGLTVYHGSVKKIEEYFADIGITVPDRVNPPDHYIDILEGIVKPDGDITIEQLPVRWMLHNGYPVPHDMLKFCDGLPSSSTGSAQEDSTHNSFSNDLWQDVKTNVEITKDQLQHNYSNSHDNSNRVTPTVGRQYRYFVGRVGKQRLREARLQALDFLILLVAGACLGTLAKVNDETIDTLGYTYTIIAVSLLCKISALRSFSVDKLQYWRESAAGISSLAHFMAKDTMDHLNTIMKPLVYLSMFYFFNNPRSSFEDNYIVLVCLVYCVTGMAYIFAILYSPSAAQLLSVLVPVVMTLIANQDKESMVLKYLGSFCYPKWTLEAFVLSNAQRYSGVWVVTRCSSLSQNGYDLSDWILCLIVLVLMGLICRFIAYFCMVTFQKK.

2 helical membrane passes run 12 to 32 and 292 to 312; these read HIFLFFVFGLSFMSFALSLDG and NIHAYGAILIASLSLLMIMVY. The segment covering 329-348 has biased composition (basic and acidic residues); that stretch reads SREAAARHAKETTQARERWK. The tract at residues 329-437 is disordered; the sequence is SREAAARHAK…QAPKGKQLHT (109 aa). Residues 484–726 form the ABC transporter domain; sequence VAFKDLTLTL…FADIGITVPD (243 aa). 518-525 is an ATP binding site; the sequence is GPSGAGKT. An ABC transmembrane type-2 domain is found at 832 to 1029; sequence RQYRYFVGRV…TLEAFVLSNA (198 aa). Transmembrane regions (helical) follow at residues 853–873, 877–897, 958–978, 979–999, and 1054–1074; these read ALDFLILLVAGACLGTLAKVN, IDTLGYTYTIIAVSLLCKISA, YIVLVCLVYCVTGMAYIFAIL, YSPSAAQLLSVLVPVVMTLIA, and WILCLIVLVLMGLICRFIAYF.

Belongs to the ABC transporter superfamily. ABCG family. Eye pigment precursor importer (TC 3.A.1.204) subfamily.

It localises to the membrane. The chain is Putative white-brown complex homolog protein 30 (WBC30) from Arabidopsis thaliana (Mouse-ear cress).